Consider the following 738-residue polypeptide: MKKRKILSLIAFLCISFIANAQQKLTSPDNNLVMTFQVDSKGAPTYELTYKNKVVIKPSTLGLELKKEDNTRTDFDWVDRRDLTKLDSKTNLYDGFEVKDTQTATFDETWQPVWGEEKEIRNHYNELAVTLYQPMNDRSIVIRFRLFNDGLGFRYEFPQQKSLNYFVIKEEHSQFGMNGDHIAFWIPGDYDTQEYDYTISRLSEIRGLMKEAITPNSSQTPFSQTGVQTALMMKTDDGLYINLHEAALVDYSCMHLNLDDKNMVFESWLTPDAKGDKGYMQTPCNTPWRTIIVSDDARNILASRITLNLNEPCKIADAASWVKPVKYIGVWWDMITGKGSWAYTDELTSVKLGETDYSKTKPNGKHSANTANVKRYIDFAAAHGFDAVLVEGWNEGWEDWFGNSKDYVFDFVTPYPDFDVKEIHRYAARKGIKMMMHHETSASVRNYERHMDKAYQFMADNGYNSVKSGYVGNIIPRGEHHYGQWMNNHYLYAVKKAADYKIMVNAHEATRPTGICRTYPNLIGNESARGTEYESFGGNKVYHTTILPFTRLVGGPMDYTPGIFETHCNKMNPANNSQVRSTIARQLALYVTMYSPLQMAADIPENYERFMDAFQFIKDVALDWDETNYLEAEPGEYITIARKAKDTDDWYVGCTAGENGHTSKLVFDFLTPGKQYIATVYADAKDADWKENPQAYTIKKGILTNKSKLNLHAANGGGYAISIKEVKDKSEAKGLKRL.

A signal peptide spans 1–21 (MKKRKILSLIAFLCISFIANA). Residue E194 coordinates Ca(2+). Substrate-binding positions include 215–217 (PNS), 437–439 (HHE), and 507–508 (HE). Ca(2+)-binding residues include E508, E526, and E532. E532 serves as the catalytic Proton donor/acceptor.

Belongs to the glycosyl hydrolase 97 family. Monomer. Ca(2+) serves as cofactor.

The protein resides in the periplasm. It catalyses the reaction Hydrolysis of terminal (1-&gt;4)-linked alpha-D-glucose residues successively from non-reducing ends of the chains with release of beta-D-glucose.. The protein operates within glycan degradation; starch degradation. Glucoamylase that hydrolyzes alpha-1,4-glucosidic linkages, alpha-1,6-, alpha-1,3- and alpha-1,2-glucosidic linkages during starch degradation. This Bacteroides thetaiotaomicron (strain ATCC 29148 / DSM 2079 / JCM 5827 / CCUG 10774 / NCTC 10582 / VPI-5482 / E50) protein is Glucan 1,4-alpha-glucosidase SusB (susB).